The following is a 186-amino-acid chain: NADH-quinone oxidoreductase subunit B (186 aa).

[4Fe-4S] cluster contacts are provided by cysteine 44, cysteine 45, cysteine 110, and cysteine 139.

This sequence belongs to the complex I 20 kDa subunit family. NDH-1 is composed of 14 different subunits. Subunits NuoB, C, D, E, F, and G constitute the peripheral sector of the complex. The cofactor is [4Fe-4S] cluster.

Its subcellular location is the cell inner membrane. It catalyses the reaction a quinone + NADH + 5 H(+)(in) = a quinol + NAD(+) + 4 H(+)(out). In terms of biological role, NDH-1 shuttles electrons from NADH, via FMN and iron-sulfur (Fe-S) centers, to quinones in the respiratory chain. The immediate electron acceptor for the enzyme in this species is believed to be ubiquinone. Couples the redox reaction to proton translocation (for every two electrons transferred, four hydrogen ions are translocated across the cytoplasmic membrane), and thus conserves the redox energy in a proton gradient. This chain is NADH-quinone oxidoreductase subunit B, found in Leptospira interrogans serogroup Icterohaemorrhagiae serovar copenhageni (strain Fiocruz L1-130).